Here is a 1466-residue protein sequence, read N- to C-terminus: MENPIDSLLLQPIYLSVLSFFLNLVLLLILFGSWLFKKRVACEDTDAIMNEEFKHISFSYNKLVLICCVSLSVFYSVLSLLSCLHWHTNGWPFLDLLLAALTWGSISVYLFGRYTNSCEQKVLFLLRVWWVFFFVVSCYHLVVDFVLYKKQEMVSVHFVISDLVGVCAGLFLCCSCLWKKGEGERIDLLKEPLLSSAESSDNEEVTAPFSKAGILSRMSFSWMSPLITLGNEKIIDIKDVPQLDRSDTTESLFWIFRSKLEWDDGERRITTFKLIKALFLSVWRDIVLSALLAFVYTVSCYVAPYLMDNFVQYLNGNRQYKNQGYVLVTTFFVAKLVECQTQRQWFFRGQKAGLGMRSVLVSMIYEKGLTLPCHSKQGHTSGEIINLMAVDADRISAFSWFMHDPWILVLQVSLALWILYKSLGLGSIAAFPATILVMLANYPFAKLEEKFQSSLMKSKDNRMKKTSEVLLNMKILKLQGWEMKFLSKILELRHIEAGWLKKFVYNSSAINSVLWAAPSFISATAFGACLLLKIPLESGKILAALATFRILQGPIYKLPETISMIVQTKVSLNRIASFLCLDDLQQDVVGRLPSGSSEMAVEISNGTFSWDDSSPIPTLRDMNFKVSQGMNVAICGTVGSGKSSLLSSILGEVPKISGNLKVCGRKAYIAQSPWIQSGKVEENILFGKPMEREWYDRVLEACSLNKDLEILPFHDQTVIGERGINLSGGQKQRIQIARALYQDADIYLFDDPFSAVDAHTGSHLFKEVLLGLLRHKTVIYVTHQVEFLPEADLILVMKDGKITQAGKYHEILDSGTDFMELVGAHTEALATIDSCETGYASEKSTTDKENEVLHHKEKQENGSDNKPSGQLVQEEEREKGKVGFTVYKKYMALAYGGAVIPLILVVQVLFQLLSIGSNYWMTWVTPVSKDVEPPVSGFTLILVYVLLAVASSFCILIRALLVAMTGFKMATELFTQMHLRIFRASMSFFDATPMGRILNRASTDQSVADLRLPGQFAYVAIAAINILGIIGVIVQVAWQVLIVFIPVVAACAWYRQYYISAARELARLAGISRSPVVHHFSETLSGITTIRSFDQEPRFRGDIMRLSDCYSRLKFHSTGAMEWLCFRLELLSTFAFASSLVILVSAPEGVINPSLAGLAITYALNLNTLQATLIWTLCDLENKMISVERMLQYTNIPSEPPLVIETTRPEKSWPSRGEITICNLQVRYGPHLPMVLHGLTCTFPGGLKTGIVGRTGCGKSTLIQTLFRIVEPAAGEIRIDGINILSIGLHDLRSRLSIIPQDPTMFEGTIRSNLDPLEEYTDDQIWEALDNCQLGDEVRKKELKLDSPVSENGQNWSVGQRQLVCLGRVLLKRSKLLVLDEATASIDTATDNLIQETLRHHFADCTVITIAHRISSVIDSDMVLLLDQGLIKEHDSPARLLEDRSSLFSKLVAEYTTSSESKSKRS.

Helical transmembrane passes span 16–36, 63–83, 91–111, 128–148, 158–178, 286–306, 322–339, 400–420, 425–445, and 512–532; these read SVLS…SWLF, LVLI…LLSC, WPFL…VYLF, VWWV…FVLY, FVIS…SCLW, IVLS…APYL, NQGY…LVEC, WFMH…WILY, LGSI…YPFA, and SVLW…CLLL. In terms of domain architecture, ABC transmembrane type-1 1 spans 286-567; the sequence is IVLSALLAFV…LPETISMIVQ (282 aa). An ABC transporter 1 domain is found at 601–824; it reads VEISNGTFSW…GTDFMELVGA (224 aa). 636 to 643 is a binding site for ATP; it reads GTVGSGKS. Positions 840 to 876 are disordered; that stretch reads ASEKSTTDKENEVLHHKEKQENGSDNKPSGQLVQEEE. The span at 844–863 shows a compositional bias: basic and acidic residues; it reads STTDKENEVLHHKEKQENGS. Transmembrane regions (helical) follow at residues 890 to 910, 937 to 957, and 1026 to 1046; these read YMAL…QVLF, GFTL…CILI, and ILGI…VFIP. One can recognise an ABC transmembrane type-1 2 domain in the interval 900 to 1182; sequence IPLILVVQVL…LIWTLCDLEN (283 aa). The region spanning 1219–1453 is the ABC transporter 2 domain; the sequence is ITICNLQVRY…RSSLFSKLVA (235 aa). 1253–1260 lines the ATP pocket; that stretch reads GRTGCGKS.

It belongs to the ABC transporter superfamily. ABCC family. Conjugate transporter (TC 3.A.1.208) subfamily. In terms of tissue distribution, ubiquitous.

The protein resides in the membrane. The enzyme catalyses ATP + H2O + xenobioticSide 1 = ADP + phosphate + xenobioticSide 2.. Functionally, pump for glutathione S-conjugates. The protein is ABC transporter C family member 6 (ABCC6) of Arabidopsis thaliana (Mouse-ear cress).